Consider the following 394-residue polypeptide: Phosphoglycerate kinase (394 aa).

Substrate contacts are provided by residues 21 to 23 (DFN), R37, 60 to 63 (HLGR), R119, and R152. Residues K202, E324, and 350 to 353 (GGDS) each bind ATP.

This sequence belongs to the phosphoglycerate kinase family. Monomer.

It is found in the cytoplasm. It catalyses the reaction (2R)-3-phosphoglycerate + ATP = (2R)-3-phospho-glyceroyl phosphate + ADP. The protein operates within carbohydrate degradation; glycolysis; pyruvate from D-glyceraldehyde 3-phosphate: step 2/5. The polypeptide is Phosphoglycerate kinase (Herpetosiphon aurantiacus (strain ATCC 23779 / DSM 785 / 114-95)).